Consider the following 1203-residue polypeptide: DNA-directed RNA polymerase subunit beta' (1203 aa).

Zn(2+) contacts are provided by Cys60, Cys62, Cys75, and Cys78. Asp449, Asp451, and Asp453 together coordinate Mg(2+). Positions 818, 892, 899, and 902 each coordinate Zn(2+). Residues 1180–1203 (RNLESGLDMPESAEESSEEETQTV) are disordered. The span at 1190 to 1203 (ESAEESSEEETQTV) shows a compositional bias: acidic residues.

It belongs to the RNA polymerase beta' chain family. As to quaternary structure, the RNAP catalytic core consists of 2 alpha, 1 beta, 1 beta' and 1 omega subunit. When a sigma factor is associated with the core the holoenzyme is formed, which can initiate transcription. It depends on Mg(2+) as a cofactor. Zn(2+) is required as a cofactor.

It catalyses the reaction RNA(n) + a ribonucleoside 5'-triphosphate = RNA(n+1) + diphosphate. In terms of biological role, DNA-dependent RNA polymerase catalyzes the transcription of DNA into RNA using the four ribonucleoside triphosphates as substrates. The protein is DNA-directed RNA polymerase subunit beta' of Oceanobacillus iheyensis (strain DSM 14371 / CIP 107618 / JCM 11309 / KCTC 3954 / HTE831).